A 452-amino-acid polypeptide reads, in one-letter code: 1,4-beta-D-glucan cellobiohydrolase A (452 aa).

An N-terminal signal peptide occupies residues 1–17 (MHQRALLFSALLTAVRA). The N-linked (GlcNAc...) asparagine glycan is linked to asparagine 62. Glutamate 227 serves as the catalytic Nucleophile. The Proton donor role is filled by glutamate 232. N-linked (GlcNAc...) asparagine glycosylation is found at asparagine 285, asparagine 335, asparagine 402, and asparagine 445.

It belongs to the glycosyl hydrolase 7 (cellulase C) family.

It is found in the secreted. The catalysed reaction is Hydrolysis of (1-&gt;4)-beta-D-glucosidic linkages in cellulose and cellotetraose, releasing cellobiose from the non-reducing ends of the chains.. Its function is as follows. The biological conversion of cellulose to glucose generally requires three types of hydrolytic enzymes: (1) Endoglucanases which cut internal beta-1,4-glucosidic bonds; (2) Exocellobiohydrolases that cut the disaccharide cellobiose from the non-reducing end of the cellulose polymer chain; (3) Beta-1,4-glucosidases which hydrolyze the cellobiose and other short cello-oligosaccharides to glucose. This is 1,4-beta-D-glucan cellobiohydrolase A (cbhA) from Aspergillus niger.